The following is a 373-amino-acid chain: Malate dehydrogenase, mitochondrial (373 aa).

NAD(+) is bound by residues 69–75 and Asp-95; that span reads GAAGGIG. Substrate-binding residues include Arg-141 and Arg-147. Residues Asn-154 and 177–179 contribute to the NAD(+) site; that span reads ISN. Substrate contacts are provided by Asn-179 and Arg-213. The Proton acceptor role is filled by His-237. Met-288 contributes to the NAD(+) binding site.

It belongs to the LDH/MDH superfamily. MDH type 1 family. Homodimer.

The protein resides in the mitochondrion matrix. The enzyme catalyses (S)-malate + NAD(+) = oxaloacetate + NADH + H(+). In Chlamydomonas reinhardtii (Chlamydomonas smithii), this protein is Malate dehydrogenase, mitochondrial.